The chain runs to 34 residues: Somatostatin (34 aa).

A disordered region spans residues alanine 1–lysine 20. The cysteines at positions 23 and 34 are disulfide-linked.

This sequence belongs to the somatostatin family.

Its subcellular location is the secreted. Its function is as follows. Somatostatin inhibits the release of somatotropin. In Myxine glutinosa (Atlantic hagfish), this protein is Somatostatin (sst).